The following is a 525-amino-acid chain: Arylsulfatase G (525 aa).

The first 16 residues, 1 to 16 (MGWLFLKVLLAGVSFS), serve as a signal peptide directing secretion. Ca(2+)-binding residues include Asp44, Asp45, and Cys84. Catalysis depends on Cys84, which acts as the Nucleophile. The residue at position 84 (Cys84) is a 3-oxoalanine (Cys). The N-linked (GlcNAc...) asparagine glycan is linked to Asn117. Residue Lys137 coordinates substrate. His139 is a catalytic residue. Residue Ser162 coordinates substrate. Asn215 carries an N-linked (GlcNAc...) asparagine glycan. His251 lines the substrate pocket. 2 residues coordinate Ca(2+): Asp302 and Asn303. Asn356 and Asn497 each carry an N-linked (GlcNAc...) asparagine glycan.

It belongs to the sulfatase family. The cofactor is Ca(2+). Post-translationally, N-glycosylated. N-glycosylated with both high mannose and complex type sugars. The conversion to 3-oxoalanine (also known as C-formylglycine, FGly), of a serine or cysteine residue in prokaryotes and of a cysteine residue in eukaryotes, is critical for catalytic activity. In terms of processing, the 63-kDa precursor undergoes proteolytic processing in two steps, yielding two fragments in the first step (apparent molecular masses of 44 and 18 kDa). In the second step, the 44-kDa fragment is processed further to the 34- and 10-kDa chains. The 10-kDa chain is a cleavage product of the 44-kDa fragment but linked to the 18-kDa chain through a disulfide bridge. As to expression, widely expressed, with very low expression in brain, lung, heart and skeletal muscle.

It is found in the lysosome. The catalysed reaction is an aryl sulfate + H2O = a phenol + sulfate + H(+). The enzyme catalyses Hydrolysis of the 3-sulfate groups of the N-sulfo-D-glucosamine 3-O-sulfate units of heparin.. Inhibited by phosphate. The phosphate forms a covalent bond with the active site 3-oxoalanine. Displays arylsulfatase activity at acidic pH towards artificial substrates, such as p-nitrocatechol sulfate and also, but with a lower activity towards p-nitrophenyl sulfate and 4-methylumbelliferyl sulfate. Catalyzes the hydrolysis of the 3-sulfate groups of the N-sulfo-D-glucosamine 3-O-sulfate units of heparin. This chain is Arylsulfatase G (ARSG), found in Homo sapiens (Human).